The primary structure comprises 352 residues: Maleylacetate reductase (352 aa).

Belongs to the iron-containing alcohol dehydrogenase family.

It carries out the reaction 3-oxoadipate + NAD(+) = maleylacetate + NADH + H(+). It catalyses the reaction 3-oxoadipate + NADP(+) = maleylacetate + NADPH + H(+). It functions in the pathway aromatic compound metabolism; 3-chlorocatechol degradation. In Pseudomonas aeruginosa, this protein is Maleylacetate reductase (clcE).